The chain runs to 831 residues: Glucan 1,3-beta-glucosidase D (831 aa).

The segment covering 1–21 has biased composition (basic and acidic residues); that stretch reads MPSQSRSRDRYGRDSDRDRSR. Disordered regions lie at residues 1–246 and 261–288; these read MPSQ…RGQS and APDM…SDGS. Over 1–300 the chain is Cytoplasmic; sequence MPSQSRSRDR…LTPFWKRKKW (300 aa). The segment covering 32-41 has biased composition (acidic residues); sequence EDDDDDDDFD. Basic and acidic residues-rich tracts occupy residues 42 to 70, 78 to 94, and 151 to 177; these read DNPR…HDDY, EPRR…ERAR, and DAAR…HKST. Low complexity predominate over residues 178-195; it reads DSSNSSAGLLNANALAKL. 2 stretches are compositionally biased toward basic and acidic residues: residues 197-216 and 275-286; these read AQHE…EAKA and PPRERRWEKDSD. A helical; Signal-anchor for type II membrane protein transmembrane segment spans residues 301-321; that stretch reads WWIGAIVLVIVVIIIVVAVVV. At 322 to 831 the chain is on the extracellular side; it reads SNNKKSDSDS…PSFGNLPEYY (510 aa). The tract at residues 325-360 is disordered; sequence KKSDSDSDSDSNSGSSDSWGGDKSSLNGLDHDSIPK. Residues 334–350 are compositionally biased toward low complexity; the sequence is DSNSGSSDSWGGDKSSL. N-linked (GlcNAc...) asparagine glycans are attached at residues Asn379, Asn396, and Asn547. The active-site Proton donor is the Glu598. Residues Asn611, Asn637, Asn670, and Asn690 are each glycosylated (N-linked (GlcNAc...) asparagine). Residue Glu703 is the Nucleophile of the active site.

Belongs to the glycosyl hydrolase 5 (cellulase A) family.

The protein resides in the cell membrane. The enzyme catalyses Successive hydrolysis of beta-D-glucose units from the non-reducing ends of (1-&gt;3)-beta-D-glucans, releasing alpha-glucose.. Its function is as follows. Glucosidase involved in the degradation of cellulosic biomass. Active on lichenan. In Emericella nidulans (strain FGSC A4 / ATCC 38163 / CBS 112.46 / NRRL 194 / M139) (Aspergillus nidulans), this protein is Glucan 1,3-beta-glucosidase D (exgD).